The following is a 284-amino-acid chain: RNase adapter protein RapZ (284 aa).

Residue glycine 8–serine 15 participates in ATP binding. Aspartate 56–asparagine 59 lines the GTP pocket. An RNA-binding region spans residues arginine 266–serine 284.

This sequence belongs to the RapZ-like family. RapZ subfamily. In terms of assembly, homotrimer.

Functionally, modulates the synthesis of GlmS, by affecting the processing and stability of the regulatory small RNA GlmZ. When glucosamine-6-phosphate (GlcN6P) concentrations are high in the cell, RapZ binds GlmZ and targets it to cleavage by RNase E. Consequently, GlmZ is inactivated and unable to activate GlmS synthesis. Under low GlcN6P concentrations, RapZ is sequestered and inactivated by an other regulatory small RNA, GlmY, preventing GlmZ degradation and leading to synthesis of GlmS. This Cronobacter sakazakii (strain ATCC BAA-894) (Enterobacter sakazakii) protein is RNase adapter protein RapZ.